A 459-amino-acid chain; its full sequence is Vasoactive intestinal polypeptide receptor 1 (459 aa).

The N-terminal stretch at 1–30 (MRPPSPPHVRWLCVLAGALACALRPAGSQA) is a signal peptide. Topologically, residues 31–142 (ASPQHECEYL…EQQQTKFYNT (112 aa)) are extracellular. Cystine bridges form between cysteine 37–cysteine 209, cysteine 50–cysteine 72, cysteine 63–cysteine 105, cysteine 86–cysteine 122, and cysteine 216–cysteine 286. 3 N-linked (GlcNAc...) asparagine glycosylation sites follow: asparagine 58, asparagine 69, and asparagine 100. Residues 143–167 (VKTGYTIGYSLSLASLLVAMAILSL) form a helical membrane-spanning segment. Over 168 to 175 (FRKLHCTR) the chain is Cytoplasmic. Residues 176–197 (NYIHMHLFMSFILRATAVFIKD) form a helical membrane-spanning segment. At 198-217 (MALFNSGEIDHCSEASVGCK) the chain is on the extracellular side. The chain crosses the membrane as a helical span at residues 218–242 (AAVVFFQYCVMANFFWLLVEGLYLY). Topologically, residues 243 to 255 (TLLAVSFFSERKY) are cytoplasmic. Residues 256 to 277 (FWGYILIGWGVPSVFITIWTVV) form a helical membrane-spanning segment. Residues 278-293 (RIYFEDFGCWDTIINS) are Extracellular-facing. Residue asparagine 292 is glycosylated (N-linked (GlcNAc...) asparagine). A helical membrane pass occupies residues 294–318 (SLWWIIKAPILLSILVNFVLFICII). Residues 319–340 (RILVQKLRPPDIGKNDSSPYSR) lie on the Cytoplasmic side of the membrane. Residues 341-361 (LAKSTLLLIPLFGIHYVMFAF) traverse the membrane as a helical segment. Over 362–369 (FPDNFKAQ) the chain is Extracellular. Residues 370-393 (VKMVFELVVGSFQGFVVAILYCFL) traverse the membrane as a helical segment. Residues 394-459 (NGEVQAELRR…SSFQAEVSLV (66 aa)) lie on the Cytoplasmic side of the membrane.

The protein belongs to the G-protein coupled receptor 2 family. As to quaternary structure, interacts with ADCYAP1/PACAP; activated by both PACAP27 and PACAP38 neuropeptides. Interacts with VIP; the interaction results in VIPR1 activation. In terms of tissue distribution, in liver, lung, intestines, thymus and brain (mostly in the cerebral cortex and hippocampus).

It is found in the cell membrane. In terms of biological role, g protein-coupled receptor activated by the neuropeptides vasoactive intestinal peptide (VIP) and pituitary adenylate cyclase-activating polypeptide (ADCYAP1/PACAP). Binds VIP and both PACAP27 and PACAP38 bioactive peptides with the following order of ligand affinity VIP = PACAP27 &gt; PACAP38. Ligand binding causes a conformation change that triggers signaling via guanine nucleotide-binding proteins (G proteins) and modulates the activity of downstream effectors. Activates cAMP-dependent pathway. This is Vasoactive intestinal polypeptide receptor 1 from Rattus norvegicus (Rat).